The sequence spans 338 residues: Palmitoyltransferase ZDHHC15 (338 aa).

The Cytoplasmic portion of the chain corresponds to 1 to 20 (MLAGCRVALPRGLRCCQRVL). A helical transmembrane segment spans residues 21–41 (SWVPVVIISLVVLWSYYAYVW). The Lumenal segment spans residues 42–56 (ELCLVTVTNPAEKAA). A helical membrane pass occupies residues 57–77 (YLLIFHTVFLLFIWTYWKAIF). At 78–172 (TPPKQPTKKF…NNCIGYSNYK (95 aa)) the chain is on the cytoplasmic side. The DHHC domain maps to 129-179 (RFCDTCQMVKPDRCHHCSVCGMCVLKMDHHCPWVNNCIGYSNYKFFLLFLA). The Zn(2+) site is built by Cys-131, Cys-134, His-144, Cys-145, Cys-148, Cys-151, and His-158. Cys-159 (S-palmitoyl cysteine intermediate) is an active-site residue. Position 165 (Cys-165) interacts with Zn(2+). The chain crosses the membrane as a helical span at residues 173–193 (FFLLFLAYAMLYCLYIGCTVF). Residues 194–210 (QYFILYWTDTLSNGRAK) lie on the Lumenal side of the membrane. A helical transmembrane segment spans residues 211–234 (FHVLFLLFVALMFFISLMFLFGYH). The Cytoplasmic portion of the chain corresponds to 235 to 338 (CWLVSLNRTT…TSHITVHIEK (104 aa)).

It belongs to the DHHC palmitoyltransferase family. Post-translationally, autopalmitoylated (in vitro).

It is found in the golgi apparatus membrane. The protein resides in the postsynaptic density. The catalysed reaction is L-cysteinyl-[protein] + hexadecanoyl-CoA = S-hexadecanoyl-L-cysteinyl-[protein] + CoA. It carries out the reaction L-cysteinyl-[protein] + tetradecanoyl-CoA = S-tetradecanoyl-L-cysteinyl-[protein] + CoA. It catalyses the reaction L-cysteinyl-[protein] + octadecanoyl-CoA = S-octadecanoyl-L-cysteinyl-[protein] + CoA. In terms of biological role, palmitoyltransferase that catalyzes the addition of palmitate onto various protein substrates. Has no stringent fatty acid selectivity and in addition to palmitate can also transfer onto target proteins myristate from tetradecanoyl-CoA and stearate from octadecanoyl-CoA. May thereby regulate target proteins association and localization to membranes. In the nervous system, probably catalyzes the palmitoylation of synaptic proteins and is involved in the differentiation of dopaminergic neurons and the development of the diencephalon. The chain is Palmitoyltransferase ZDHHC15 (zdhhc15) from Xenopus laevis (African clawed frog).